Consider the following 747-residue polypeptide: Kinesin-like protein KIF3B (747 aa).

Met1 is subject to N-acetylmethionine. Ser2 is modified (N-acetylserine; in Kinesin-like protein KIF3B, N-terminally processed). A Kinesin motor domain is found at 9–340; sequence SVRVVVRCRP…LRYANRAKNI (332 aa). 96-103 is an ATP binding site; that stretch reads GQTGTGKT. Residues 346–579 are a coiled coil; it reads VNEDPKDALL…EQTQNELTRE (234 aa). Disordered regions lie at residues 374–412 and 698–747; these read IGRRKRREKRREGGGSGGGGEEEEEEGEEGEEDGDDKDD and IQVD…LVPK. The segment covering 393 to 411 has biased composition (acidic residues); sequence GEEEEEEGEEGEEDGDDKD. Residues 580 to 747 are globular; sequence LKLKHLIIEN…YPQSRGLVPK (168 aa). A compositionally biased stretch (polar residues) spans 701-710; that stretch reads DASSFESTAS. Positions 711 to 721 are enriched in basic residues; sequence RKPKARPKSGR. Positions 722 to 735 are enriched in low complexity; sequence KSGSSSSSSGNPAS.

The protein belongs to the TRAFAC class myosin-kinesin ATPase superfamily. Kinesin family. Kinesin II subfamily. In terms of assembly, heterodimer of KIF3A and KIF3B. KIF3A/KIF3B heterodimer interacts with KIFAP3 forming a heterotrimeric (KIF3A/KIF3B/KIFAP3) complex. Interacts with the SMC3 subunit of the cohesin complex. Interacts directly with IFT20. Interacts with FLCN.

Its subcellular location is the cytoplasm. It is found in the cytoskeleton. The protein localises to the cell projection. It localises to the cilium. The protein resides in the dendritic spine. Its function is as follows. Microtubule-based molecular motor that transport intracellular cargos, such as vesicles, organelles and protein complexes. Uses ATP hydrolysis to generate force to bind and move along the microtubule. Plays a role in cilia formation. Involved in photoreceptor integrity and opsin trafficking in rod photoreceptors. Transports vesicles containing N-methyl-D-aspartate (NMDA) receptor subunit GRIN2A into neuronal dendrites. This chain is Kinesin-like protein KIF3B, found in Mus musculus (Mouse).